The chain runs to 626 residues: Extracellular metalloproteinase 1 (626 aa).

The first 17 residues, 1-17, serve as a signal peptide directing secretion; the sequence is MLSSLLAGAGLVALAAS. Residues 18–241 constitute a propeptide that is removed on maturation; sequence HPTSHGNALT…IHGVVDYSAD (224 aa). N-linked (GlcNAc...) asparagine glycosylation occurs at asparagine 315. Histidine 425 is a binding site for Zn(2+). Glutamate 426 is an active-site residue. Position 429 (histidine 429) interacts with Zn(2+). The tract at residues 606–626 is disordered; sequence GSGARYSSTARTGSTALPSGC. Residues 610-626 show a composition bias toward polar residues; sequence RYSSTARTGSTALPSGC.

It belongs to the peptidase M36 family. It depends on Zn(2+) as a cofactor.

Its subcellular location is the secreted. Functionally, secreted metalloproteinase that allows assimilation of proteinaceous substrates. The protein is Extracellular metalloproteinase 1 (MEP1) of Phaeosphaeria nodorum (strain SN15 / ATCC MYA-4574 / FGSC 10173) (Glume blotch fungus).